We begin with the raw amino-acid sequence, 774 residues long: Multiple C2 domain and transmembrane region protein 11 (774 aa).

Positions 1–12 (MAVNGTGNGTGD) are enriched in gly residues. The interval 1–30 (MAVNGTGNGTGDGDFSLKETSPNIGNGGVN) is disordered. 3 C2 domains span residues 9–145 (GTGD…PQWY), 184–307 (VTGE…SLWY), and 338–471 (LDES…THSY). Ca(2+)-binding residues include Asp-62, Asn-110, Asp-112, and Asp-118. 2 helical membrane-spanning segments follow: residues 608–628 (LFVV…CFVF) and 722–742 (FVSC…FLAF).

The protein belongs to the MCTP family. Ca(2+) is required as a cofactor. In terms of tissue distribution, observed in flowers.

The protein resides in the endoplasmic reticulum membrane. Functionally, may function as a signaling molecule by regulating the trafficking of other regulators. The sequence is that of Multiple C2 domain and transmembrane region protein 11 from Arabidopsis thaliana (Mouse-ear cress).